The following is a 112-amino-acid chain: ATP-dependent Clp protease adapter protein ClpS (112 aa).

It belongs to the ClpS family. As to quaternary structure, binds to the N-terminal domain of the chaperone ClpA.

Its function is as follows. Involved in the modulation of the specificity of the ClpAP-mediated ATP-dependent protein degradation. The sequence is that of ATP-dependent Clp protease adapter protein ClpS from Rhodococcus opacus (strain B4).